We begin with the raw amino-acid sequence, 1342 residues long: DNA-directed RNA polymerase subunit beta (1342 aa).

This sequence belongs to the RNA polymerase beta chain family. As to quaternary structure, the RNAP catalytic core consists of 2 alpha, 1 beta, 1 beta' and 1 omega subunit. When a sigma factor is associated with the core the holoenzyme is formed, which can initiate transcription.

The catalysed reaction is RNA(n) + a ribonucleoside 5'-triphosphate = RNA(n+1) + diphosphate. In terms of biological role, DNA-dependent RNA polymerase catalyzes the transcription of DNA into RNA using the four ribonucleoside triphosphates as substrates. The sequence is that of DNA-directed RNA polymerase subunit beta from Aeromonas salmonicida (strain A449).